The following is a 181-amino-acid chain: Crustacyanin-C1 subunit (181 aa).

3 disulfide bridges follow: C12–C121, C51–C173, and C117–C150.

This sequence belongs to the calycin superfamily. Lipocalin family. As to quaternary structure, oligomer; Can form dimers (beta-crustacyanin); or complexes of 16 subunits (alpha-crustacyanin). There are five types of subunits: A1, A2, A3, C1 and C2. In terms of tissue distribution, found in the carapace.

Its subcellular location is the secreted. It is found in the extracellular space. Binds the carotenoid astaxanthin (AXT) which provides the blue coloration to the carapace of the lobster. This Homarus gammarus (European lobster) protein is Crustacyanin-C1 subunit.